A 647-amino-acid polypeptide reads, in one-letter code: UvrABC system protein C (647 aa).

The region spanning 16 to 95 (VEPGVYRFRD…IKEFDPRFNV (80 aa)) is the GIY-YIG domain. The region spanning 208–243 (DRYARELEQQMNAAAENLDFERAARLRDDRSALKRA) is the UVR domain.

Belongs to the UvrC family. Interacts with UvrB in an incision complex.

It is found in the cytoplasm. Functionally, the UvrABC repair system catalyzes the recognition and processing of DNA lesions. UvrC both incises the 5' and 3' sides of the lesion. The N-terminal half is responsible for the 3' incision and the C-terminal half is responsible for the 5' incision. The polypeptide is UvrABC system protein C (Mycobacterium marinum (strain ATCC BAA-535 / M)).